Here is a 313-residue protein sequence, read N- to C-terminus: Catalase-related peroxidase (313 aa).

Residue His28 is part of the active site. Tyr294 is a binding site for heme.

The protein belongs to the catalase family. In terms of assembly, monomer. The cofactor is heme.

Its function is as follows. Has an organic peroxide-dependent peroxidase activity. Exhibits strong peroxidase activity using organic hydroperoxides as cosubstrates, weak peroxidase activity using hydrogen peroxide and negligible catalase activity. May have a role in elimination of reactive oxygen species, in particular by deactivating hydroperoxides. The polypeptide is Catalase-related peroxidase (Mycolicibacterium paratuberculosis (strain ATCC BAA-968 / K-10) (Mycobacterium paratuberculosis)).